Reading from the N-terminus, the 1430-residue chain is Gag-Pol polyprotein (1430 aa).

The N-myristoyl glycine; by host moiety is linked to residue glycine 2. The interaction with Gp41 stretch occupies residues 7-31; sequence ILSGGKLDEWEKIQLRPGGKKRYKM. Residues 8 to 43 are interaction with host CALM1; that stretch reads LSGGKLDEWEKIQLRPGGKKRYKMKHLIWASRELER. Residues 12-19 are interaction with host AP3D1; sequence KLDEWEKI. Residues 14 to 33 form an interaction with membrane phosphatidylinositol 4,5-bisphosphate and RNA region; it reads DEWEKIQLRPGGKKRYKMKH. Positions 16–22 match the Nuclear export signal motif; it reads WEKIQLR. The short motif at 26-32 is the Nuclear localization signal element; sequence KKRYKMK. Positions 73–77 are interaction with membrane phosphatidylinositol 4,5-bisphosphate; it reads EELKS. The residue at position 128 (tyrosine 128) is a Phosphotyrosine; by host. The interaction with human PPIA/CYPA and NUP153 stretch occupies residues 185 to 223; the sequence is NTVGGHQAAMQMLKDTINEEAAEWDRLHPVHAGPAPPGQ. The segment at 273 to 359 is dimerization/Multimerization of capsid protein p24; it reads YSPVSILDIK…GGPSHKARVL (87 aa). 2 consecutive CCHC-type zinc fingers follow at residues 384–401 and 405–422; these read VKCF…NCRA and KGCW…DCTE. The disordered stretch occupies residues 438–475; sequence EARKFPSEQTRANSPTSRELRVQRGDNPLSEAGAERRG. Over residues 444 to 454 the composition is skewed to polar residues; sequence SEQTRANSPTS. The tract at residues 483-487 is dimerization of protease; sequence PQITL. One can recognise a Peptidase A2 domain in the interval 502–571; it reads KEALLDTGAD…TPVNIIGRNM (70 aa). The active-site For protease activity; shared with dimeric partner is the aspartate 507. Dimerization of protease regions lie at residues 531 to 537 and 570 to 582; these read GIGGFIK and NMLT…LNFP. Residues 625-815 enclose the Reverse transcriptase domain; sequence EGKISKIGPE…PPFLWMGHEL (191 aa). Aspartate 691, aspartate 766, and aspartate 767 together coordinate Mg(2+). The segment at 808–816 is RT 'primer grip'; sequence FLWMGHELH. The Tryptophan repeat motif signature appears at 980-996; sequence WDTWWTDYWQATWIPEW. Residues 1016-1139 enclose the RNase H type-1 domain; that stretch reads IAGADTFYVD…VDKLVSAGVR (124 aa). Mg(2+) is bound by residues aspartate 1025, glutamate 1060, aspartate 1080, and aspartate 1131. An Integrase-type zinc finger spans residues 1145–1186; the sequence is DGIDKAQEEHEKYHNNWRAMASDFNLPPIVAKEIVASCDKCQ. 4 residues coordinate Zn(2+): histidine 1154, histidine 1158, cysteine 1182, and cysteine 1185. Residues 1196–1346 form the Integrase catalytic domain; sequence VDCSPGIWQL…SAGERIIDII (151 aa). Aspartate 1206, aspartate 1258, and glutamate 1294 together coordinate Mg(2+). Residues 1365–1412 constitute a DNA-binding region (integrase-type); that stretch reads FRVYYRDSRNPVWKGPAKLLWKGEGAVVIQDNSEIKIVPRRKAKIIRD.

As to quaternary structure, homotrimer; further assembles as hexamers of trimers. Interacts with gp41 (via C-terminus). Interacts with host CALM1; this interaction induces a conformational change in the Matrix protein, triggering exposure of the myristate group. Interacts with host AP3D1; this interaction allows the polyprotein trafficking to multivesicular bodies during virus assembly. Part of the pre-integration complex (PIC) which is composed of viral genome, matrix protein, Vpr and integrase. In terms of assembly, homodimer; the homodimer further multimerizes as homohexamers or homopentamers. Interacts with human PPIA/CYPA; This interaction stabilizes the capsid. Interacts with human NUP153. Interacts with host PDZD8; this interaction stabilizes the capsid. Interacts with monkey TRIM5; this interaction destabilizes the capsid. Homodimer, whose active site consists of two apposed aspartic acid residues. As to quaternary structure, heterodimer of p66 RT and p51 RT (RT p66/p51). Heterodimerization of RT is essential for DNA polymerase activity. The overall folding of the subdomains is similar in p66 RT and p51 RT but the spatial arrangements of the subdomains are dramatically different. In terms of assembly, homotetramer; may further associate as a homohexadecamer. Part of the pre-integration complex (PIC) which is composed of viral genome, matrix protein, Vpr and integrase. Interacts with human SMARCB1/INI1 and human PSIP1/LEDGF isoform 1. Interacts with human KPNA3; this interaction might play a role in nuclear import of the pre-integration complex. Interacts with human NUP153; this interaction might play a role in nuclear import of the pre-integration complex. Mg(2+) is required as a cofactor. Post-translationally, specific enzymatic cleavages by the viral protease yield mature proteins. The protease is released by autocatalytic cleavage. The polyprotein is cleaved during and after budding, this process is termed maturation. Proteolytic cleavage of p66 RT removes the RNase H domain to yield the p51 RT subunit. Nucleocapsid protein p7 might be further cleaved after virus entry. In terms of processing, tyrosine phosphorylated presumably in the virion by a host kinase. Phosphorylation is apparently not a major regulator of membrane association. Phosphorylated possibly by host MAPK1; this phosphorylation is necessary for Pin1-mediated virion uncoating. Post-translationally, methylated by host PRMT6, impairing its function by reducing RNA annealing and the initiation of reverse transcription.

Its subcellular location is the host cell membrane. The protein resides in the host endosome. It localises to the host multivesicular body. It is found in the virion membrane. The protein localises to the host nucleus. Its subcellular location is the host cytoplasm. The protein resides in the virion. The enzyme catalyses Specific for a P1 residue that is hydrophobic, and P1' variable, but often Pro.. It carries out the reaction Endohydrolysis of RNA in RNA/DNA hybrids. Three different cleavage modes: 1. sequence-specific internal cleavage of RNA. Human immunodeficiency virus type 1 and Moloney murine leukemia virus enzymes prefer to cleave the RNA strand one nucleotide away from the RNA-DNA junction. 2. RNA 5'-end directed cleavage 13-19 nucleotides from the RNA end. 3. DNA 3'-end directed cleavage 15-20 nucleotides away from the primer terminus.. It catalyses the reaction 3'-end directed exonucleolytic cleavage of viral RNA-DNA hybrid.. The catalysed reaction is DNA(n) + a 2'-deoxyribonucleoside 5'-triphosphate = DNA(n+1) + diphosphate. With respect to regulation, protease: The viral protease is inhibited by many synthetic protease inhibitors (PIs), such as amprenavir, atazanavir, indinavir, loprinavir, nelfinavir, ritonavir and saquinavir. Use of protease inhibitors in tritherapy regimens permit more ambitious therapeutic strategies. Reverse transcriptase/ribonuclease H: RT can be inhibited either by nucleoside RT inhibitors (NRTIs) or by non nucleoside RT inhibitors (NNRTIs). NRTIs act as chain terminators, whereas NNRTIs inhibit DNA polymerization by binding a small hydrophobic pocket near the RT active site and inducing an allosteric change in this region. Classical NRTIs are abacavir, adefovir (PMEA), didanosine (ddI), lamivudine (3TC), stavudine (d4T), tenofovir (PMPA), zalcitabine (ddC), and zidovudine (AZT). Classical NNRTIs are atevirdine (BHAP U-87201E), delavirdine, efavirenz (DMP-266), emivirine (I-EBU), and nevirapine (BI-RG-587). The tritherapies used as a basic effective treatment of AIDS associate two NRTIs and one NNRTI. Mediates, with Gag polyprotein, the essential events in virion assembly, including binding the plasma membrane, making the protein-protein interactions necessary to create spherical particles, recruiting the viral Env proteins, and packaging the genomic RNA via direct interactions with the RNA packaging sequence (Psi). Gag-Pol polyprotein may regulate its own translation, by the binding genomic RNA in the 5'-UTR. At low concentration, the polyprotein would promote translation, whereas at high concentration, the polyprotein would encapsidate genomic RNA and then shut off translation. In terms of biological role, targets the polyprotein to the plasma membrane via a multipartite membrane-binding signal, that includes its myristoylated N-terminus. Matrix protein is part of the pre-integration complex. Implicated in the release from host cell mediated by Vpu. Binds to RNA. Its function is as follows. Forms the conical core that encapsulates the genomic RNA-nucleocapsid complex in the virion. Most core are conical, with only 7% tubular. The core is constituted by capsid protein hexamer subunits. The core is disassembled soon after virion entry. Host restriction factors such as TRIM5-alpha or TRIMCyp bind retroviral capsids and cause premature capsid disassembly, leading to blocks in reverse transcription. Capsid restriction by TRIM5 is one of the factors which restricts HIV-1 to the human species. Host PIN1 apparently facilitates the virion uncoating. On the other hand, interactions with PDZD8 or CYPA stabilize the capsid. Functionally, encapsulates and protects viral dimeric unspliced genomic RNA (gRNA). Binds these RNAs through its zinc fingers. Acts as a nucleic acid chaperone which is involved in rearangement of nucleic acid secondary structure during gRNA retrotranscription. Also facilitates template switch leading to recombination. As part of the polyprotein, participates in gRNA dimerization, packaging, tRNA incorporation and virion assembly. Aspartyl protease that mediates proteolytic cleavages of Gag and Gag-Pol polyproteins during or shortly after the release of the virion from the plasma membrane. Cleavages take place as an ordered, step-wise cascade to yield mature proteins. This process is called maturation. Displays maximal activity during the budding process just prior to particle release from the cell. Also cleaves Nef and Vif, probably concomitantly with viral structural proteins on maturation of virus particles. Hydrolyzes host EIF4GI and PABP1 in order to shut off the capped cellular mRNA translation. The resulting inhibition of cellular protein synthesis serves to ensure maximal viral gene expression and to evade host immune response. Also mediates cleavage of host YTHDF3. Mediates cleavage of host CARD8, thereby activating the CARD8 inflammasome, leading to the clearance of latent HIV-1 in patient CD4(+) T-cells after viral reactivation; in contrast, HIV-1 can evade CARD8-sensing when its protease remains inactive in infected cells prior to viral budding. In terms of biological role, multifunctional enzyme that converts the viral RNA genome into dsDNA in the cytoplasm, shortly after virus entry into the cell. This enzyme displays a DNA polymerase activity that can copy either DNA or RNA templates, and a ribonuclease H (RNase H) activity that cleaves the RNA strand of RNA-DNA heteroduplexes in a partially processive 3' to 5' endonucleasic mode. Conversion of viral genomic RNA into dsDNA requires many steps. A tRNA(3)-Lys binds to the primer-binding site (PBS) situated at the 5'-end of the viral RNA. RT uses the 3' end of the tRNA primer to perform a short round of RNA-dependent minus-strand DNA synthesis. The reading proceeds through the U5 region and ends after the repeated (R) region which is present at both ends of viral RNA. The portion of the RNA-DNA heteroduplex is digested by the RNase H, resulting in a ssDNA product attached to the tRNA primer. This ssDNA/tRNA hybridizes with the identical R region situated at the 3' end of viral RNA. This template exchange, known as minus-strand DNA strong stop transfer, can be either intra- or intermolecular. RT uses the 3' end of this newly synthesized short ssDNA to perform the RNA-dependent minus-strand DNA synthesis of the whole template. RNase H digests the RNA template except for two polypurine tracts (PPTs) situated at the 5'-end and near the center of the genome. It is not clear if both polymerase and RNase H activities are simultaneous. RNase H probably can proceed both in a polymerase-dependent (RNA cut into small fragments by the same RT performing DNA synthesis) and a polymerase-independent mode (cleavage of remaining RNA fragments by free RTs). Secondly, RT performs DNA-directed plus-strand DNA synthesis using the PPTs that have not been removed by RNase H as primers. PPTs and tRNA primers are then removed by RNase H. The 3' and 5' ssDNA PBS regions hybridize to form a circular dsDNA intermediate. Strand displacement synthesis by RT to the PBS and PPT ends produces a blunt ended, linear dsDNA copy of the viral genome that includes long terminal repeats (LTRs) at both ends. Its function is as follows. Catalyzes viral DNA integration into the host chromosome, by performing a series of DNA cutting and joining reactions. This enzyme activity takes place after virion entry into a cell and reverse transcription of the RNA genome in dsDNA. The first step in the integration process is 3' processing. This step requires a complex comprising the viral genome, matrix protein, Vpr and integrase. This complex is called the pre-integration complex (PIC). The integrase protein removes 2 nucleotides from each 3' end of the viral DNA, leaving recessed CA OH's at the 3' ends. In the second step, the PIC enters cell nucleus. This process is mediated through integrase and Vpr proteins, and allows the virus to infect a non dividing cell. This ability to enter the nucleus is specific of lentiviruses, other retroviruses cannot and rely on cell division to access cell chromosomes. In the third step, termed strand transfer, the integrase protein joins the previously processed 3' ends to the 5' ends of strands of target cellular DNA at the site of integration. The 5'-ends are produced by integrase-catalyzed staggered cuts, 5 bp apart. A Y-shaped, gapped, recombination intermediate results, with the 5'-ends of the viral DNA strands and the 3' ends of target DNA strands remaining unjoined, flanking a gap of 5 bp. The last step is viral DNA integration into host chromosome. This involves host DNA repair synthesis in which the 5 bp gaps between the unjoined strands are filled in and then ligated. Since this process occurs at both cuts flanking the HIV genome, a 5 bp duplication of host DNA is produced at the ends of HIV-1 integration. Alternatively, Integrase may catalyze the excision of viral DNA just after strand transfer, this is termed disintegration. The polypeptide is Gag-Pol polyprotein (gag-pol) (Homo sapiens (Human)).